The following is a 308-amino-acid chain: Low density lipoprotein receptor adapter protein 1 (308 aa).

Position 1 is an N-acetylmethionine (Met1). 3 positions are modified to phosphoserine: Ser14, Ser186, and Ser202. A PID domain is found at 42–196 (LLEGMLFSLK…QEGGDVLGAR (155 aa)). A Clathrin box motif is present at residues 212–216 (LLDLE). The AP-2 complex binding stretch occupies residues 249 to 276 (WELDDGLDEAFSRLAQSRTNPQVLDTGL). Residues 257 to 266 (EAFSRLAQSR) carry the [DE]-X(1,2)-F-X-X-[FL]-X-X-X-R motif motif.

As to quaternary structure, interacts (via PID domain) with LDLR (via NPXY motif). Binds to soluble clathrin trimers. Interacts with AP2B1; the interaction mediates the association with the AP-2 complex. Interacts with VLDLR. Interacts with LRP2. As to expression, expressed at high levels in the kidney, liver, and placenta, with lower levels detectable in brain, heart, muscle, colon, spleen, intestine, lung, and leukocytes.

Its subcellular location is the cytoplasm. In terms of biological role, adapter protein (clathrin-associated sorting protein (CLASP)) required for efficient endocytosis of the LDL receptor (LDLR) in polarized cells such as hepatocytes and lymphocytes, but not in non-polarized cells (fibroblasts). May be required for LDL binding and internalization but not for receptor clustering in coated pits. May facilitate the endocytosis of LDLR and LDLR-LDL complexes from coated pits by stabilizing the interaction between the receptor and the structural components of the pits. May also be involved in the internalization of other LDLR family members. Binds to phosphoinositides, which regulate clathrin bud assembly at the cell surface. Required for trafficking of LRP2 to the endocytic recycling compartment which is necessary for LRP2 proteolysis, releasing a tail fragment which translocates to the nucleus and mediates transcriptional repression. This is Low density lipoprotein receptor adapter protein 1 from Homo sapiens (Human).